The following is a 341-amino-acid chain: Anthranilate phosphoribosyltransferase (341 aa).

5-phospho-alpha-D-ribose 1-diphosphate-binding positions include Gly-79, 82 to 83 (GD), Thr-87, 89 to 92 (NIST), 107 to 115 (KHGNRAVSS), and Ser-119. Residue Gly-79 participates in anthranilate binding. Ser-91 provides a ligand contact to Mg(2+). Residue Asn-110 participates in anthranilate binding. Arg-165 serves as a coordination point for anthranilate. The Mg(2+) site is built by Asp-224 and Glu-225.

Belongs to the anthranilate phosphoribosyltransferase family. In terms of assembly, homodimer. Requires Mg(2+) as cofactor.

It catalyses the reaction N-(5-phospho-beta-D-ribosyl)anthranilate + diphosphate = 5-phospho-alpha-D-ribose 1-diphosphate + anthranilate. It participates in amino-acid biosynthesis; L-tryptophan biosynthesis; L-tryptophan from chorismate: step 2/5. Catalyzes the transfer of the phosphoribosyl group of 5-phosphorylribose-1-pyrophosphate (PRPP) to anthranilate to yield N-(5'-phosphoribosyl)-anthranilate (PRA). This is Anthranilate phosphoribosyltransferase from Bacillus thuringiensis subsp. konkukian (strain 97-27).